Consider the following 284-residue polypeptide: Ribosomal RNA small subunit methyltransferase A (284 aa).

Residues His12, Leu14, Gly47, Glu68, Asp93, and Asn118 each coordinate S-adenosyl-L-methionine.

The protein belongs to the class I-like SAM-binding methyltransferase superfamily. rRNA adenine N(6)-methyltransferase family. RsmA subfamily.

The protein localises to the cytoplasm. The catalysed reaction is adenosine(1518)/adenosine(1519) in 16S rRNA + 4 S-adenosyl-L-methionine = N(6)-dimethyladenosine(1518)/N(6)-dimethyladenosine(1519) in 16S rRNA + 4 S-adenosyl-L-homocysteine + 4 H(+). Functionally, specifically dimethylates two adjacent adenosines (A1518 and A1519) in the loop of a conserved hairpin near the 3'-end of 16S rRNA in the 30S particle. May play a critical role in biogenesis of 30S subunits. This chain is Ribosomal RNA small subunit methyltransferase A, found in Synechocystis sp. (strain ATCC 27184 / PCC 6803 / Kazusa).